A 227-amino-acid polypeptide reads, in one-letter code: PKHD-type hydroxylase Pden_4677 (227 aa).

Residues 78 to 178 form the Fe2OG dioxygenase domain; sequence HILPPMFNRY…RWASFFWAQS (101 aa). Residues His96, Asp98, and His159 each coordinate Fe cation. Arg169 is a 2-oxoglutarate binding site.

Fe(2+) is required as a cofactor. Requires L-ascorbate as cofactor.

This chain is PKHD-type hydroxylase Pden_4677, found in Paracoccus denitrificans (strain Pd 1222).